The chain runs to 959 residues: Probable transport protein MmpL4 (959 aa).

The next 11 membrane-spanning stretches (helical) occupy residues 25–45, 205–225, 239–259, 300–320, 333–353, 381–401, 766–786, 790–810, 818–838, 872–892, and 902–922; these read FAVPIILVWLAIAVTVSVFIP, VIVILVTLLLVYRSFITVILL, VVALLGHTGLIGLSTFAVNLL, FHVILGSGLTISGATFCLSFA, AVGMLIAVAVALTLGPAVLTV, WPLPILITTCAIAMVGLLALP, WDLVIAGISSLCLIFIIMLII, FVAAAVIVGTVALSLGASFGL, ILGIELHYLVLAMSVIVLLAV, VVTNAGLVFAFTMASMVVSDL, and IGLGLLFDTLIVRSFMMPSIA.

This sequence belongs to the resistance-nodulation-cell division (RND) (TC 2.A.6) family. MmpL subfamily.

It localises to the cell membrane. This is Probable transport protein MmpL4 (mmpL4) from Mycobacterium leprae (strain TN).